The primary structure comprises 136 residues: Large ribosomal subunit protein uL16 (136 aa).

It belongs to the universal ribosomal protein uL16 family. In terms of assembly, part of the 50S ribosomal subunit.

Its function is as follows. Binds 23S rRNA and is also seen to make contacts with the A and possibly P site tRNAs. This chain is Large ribosomal subunit protein uL16, found in Shewanella piezotolerans (strain WP3 / JCM 13877).